A 430-amino-acid chain; its full sequence is MKNVVVVGSQWGDEGKGKIVDWLSDQADVVIRFQGGHNAGHTLVIDGTTYKLRLLPSGIVRKNKISIIGNGVVVDPWALLEEIEEIKSKGVEVNVDNFIISESANLILPFHREMDEIREDAAGKGKIGTTRRGIGPAYEDKVGRRSIRVMDLRSETNLDHRLETVLLHHNAIRKGLGKKIFEKDKLKEELLKIAPEILKFSQPVWLRIDEFKKQKKRILFEGAQGILLDVDHGTYPFVTSSNTVASAAATGTGCGPNSIHYVLGITKAYTTRVGEGPFPTELTDDIGELLGSRGKEFGTVTSRKRRCGWFDGVLVRQTIKISGIDGIALTKLDVLDELDEIKMCVEYELDGKKMDYLPAAVEDQLKIKPIYKTFPGWKSSTQGIKNIENLPENAKNYIYALEDFIGTKVSSISTSPEREDTILLENPFEV.

Residues 12–18 (GDEGKGK) and 40–42 (GHT) contribute to the GTP site. Asp13 serves as the catalytic Proton acceptor. Mg(2+) contacts are provided by Asp13 and Gly40. IMP contacts are provided by residues 13–16 (DEGK), 38–41 (NAGH), Thr130, Arg144, Gln224, Thr239, and Arg303. His41 (proton donor) is an active-site residue. A substrate-binding site is contributed by 299–305 (TVTSRKR). GTP contacts are provided by residues Arg305, 331 to 333 (KLD), and 413 to 415 (STS).

The protein belongs to the adenylosuccinate synthetase family. In terms of assembly, homodimer. Mg(2+) serves as cofactor.

The protein resides in the cytoplasm. It catalyses the reaction IMP + L-aspartate + GTP = N(6)-(1,2-dicarboxyethyl)-AMP + GDP + phosphate + 2 H(+). The protein operates within purine metabolism; AMP biosynthesis via de novo pathway; AMP from IMP: step 1/2. Functionally, plays an important role in the de novo pathway of purine nucleotide biosynthesis. Catalyzes the first committed step in the biosynthesis of AMP from IMP. The polypeptide is Adenylosuccinate synthetase (Pelagibacter ubique (strain HTCC1062)).